We begin with the raw amino-acid sequence, 210 residues long: Guanylate kinase (210 aa).

The 179-residue stretch at 5–183 (GILFVISAPS…AVEEFKSIIL (179 aa)) folds into the Guanylate kinase-like domain. An ATP-binding site is contributed by 12–19 (APSGAGKT).

The protein belongs to the guanylate kinase family.

The protein localises to the cytoplasm. The enzyme catalyses GMP + ATP = GDP + ADP. Functionally, essential for recycling GMP and indirectly, cGMP. The protein is Guanylate kinase of Syntrophotalea carbinolica (strain DSM 2380 / NBRC 103641 / GraBd1) (Pelobacter carbinolicus).